A 608-amino-acid polypeptide reads, in one-letter code: UvrABC system protein C (608 aa).

In terms of domain architecture, GIY-YIG spans 13-91 (HDAGVYRMYD…IKTYQPRYNV (79 aa)). One can recognise a UVR domain in the interval 201-236 (QQVLEHLIHKMEQASLALDFEEAARIRDQIQAVRAV).

This sequence belongs to the UvrC family. In terms of assembly, interacts with UvrB in an incision complex.

It is found in the cytoplasm. In terms of biological role, the UvrABC repair system catalyzes the recognition and processing of DNA lesions. UvrC both incises the 5' and 3' sides of the lesion. The N-terminal half is responsible for the 3' incision and the C-terminal half is responsible for the 5' incision. The sequence is that of UvrABC system protein C from Pasteurella multocida (strain Pm70).